Reading from the N-terminus, the 1563-residue chain is Rab-3-interacting molecule unc-10 (1563 aa).

The RabBD domain maps to 7 to 133 (MPDLSHLSAE…AKTGKWFQPE (127 aa)). The span at 25 to 35 (FKRQKDEEAKE) shows a compositional bias: basic and acidic residues. Positions 25–50 (FKRQKDEEAKETQISQKASEELSELD) are disordered. Residues 66–121 (TQDDAICQICQKTKFADGIGHKCFYCQLRSCARCGGRAQSKNKAIWACSLCQKRQQ) form an FYVE-type zinc finger. Residues C72, C75, C88, C91, C96, C99, C113, and C116 each contribute to the Zn(2+) site. Disordered regions lie at residues 128–466 (KWFQ…DHLN) and 582–605 (GGLD…RNDH). Residues 172 to 182 (NTPNYQNNQQP) show a composition bias toward polar residues. Low complexity-rich tracts occupy residues 190-284 (NHNQ…RNQT) and 300-316 (QTPQ…VGAA). Residues 326 to 345 (QEQHHQQMNEQRTDNNRMRE) are compositionally biased toward basic and acidic residues. Polar residues-rich tracts occupy residues 356-367 (RQPSLEQTTPMN) and 379-389 (QRPTFYTGNSE). The segment covering 395 to 415 (FDGQMQQGSQQNNQNQNQNNR) has biased composition (low complexity). The 91-residue stretch at 643–733 (HMILHRTENS…DTSVELIVSR (91 aa)) folds into the PDZ domain. The C2 1 domain occupies 840–962 (IFGRIEVSFV…PLDGEHSLMC (123 aa)). 3 disordered regions span residues 1054-1163 (ENDI…YLGD), 1177-1311 (GQMT…GGSA), and 1346-1373 (VGIP…KEST). Over residues 1086–1097 (WTQNHQRQSGYT) the composition is skewed to polar residues. The span at 1112–1121 (YNRRQQRRPR) shows a compositional bias: basic residues. A compositionally biased stretch (basic and acidic residues) spans 1129-1154 (MEREDMYDPTRKHRDDNEYSMRESVR). Positions 1181-1230 (PKQHNQQHQPHPLSQAHQQQQTAGVQPQHHQGFQQQQHPQQPNQQMQQMQ) are enriched in low complexity. A compositionally biased stretch (polar residues) spans 1242 to 1255 (GSETLSVHSTNSMP). The span at 1256-1277 (TTMTTVNRRNMNANNTSNDNTS) shows a compositional bias: low complexity. Residues 1278-1288 (FAETPTANTNR) show a composition bias toward polar residues. Low complexity predominate over residues 1297 to 1311 (NSLASSSSVAGGGSA). Residues 1417–1536 (VLGEIQIALM…LGSQPLIGWY (120 aa)) form the C2 2 domain.

In terms of tissue distribution, restricted to discrete puncta in synapse-rich regions of the nervous system including the nerve ring, the ventral nerve cord and the dorsal nerve cord. Localized expression was found in the head.

It is found in the synapse. Regulates the efficiency of a post-docking step of the release pathway. Acts after vesicle docking likely via regulating priming. May regulate the conformational changes in syntaxin. Binding of vesicles via rab-3[GTP] to Rim may signal the presence of a docked synaptic vesicle. Rim may then signal to unc-13 to change the conformation of syntaxin from the closed to the open state. Syntaxin could then engage synaptobrevin on the docked vesicle to form SNARE complexes and to prime the vesicle for release. Not required for the development or the structural organization of synapses. May play a role in regulating entry into the dauer state. In Caenorhabditis elegans, this protein is Rab-3-interacting molecule unc-10.